The following is a 205-amino-acid chain: Recombination protein RecR (205 aa).

The C4-type zinc finger occupies 64–79 (CSRCYFITQNDLCAIC). The Toprim domain maps to 87–182 (RIVCVVEEPL…RVTRLARGLP (96 aa)).

It belongs to the RecR family.

May play a role in DNA repair. It seems to be involved in an RecBC-independent recombinational process of DNA repair. It may act with RecF and RecO. The polypeptide is Recombination protein RecR (Roseiflexus castenholzii (strain DSM 13941 / HLO8)).